Here is a 240-residue protein sequence, read N- to C-terminus: MATPSTQTTDPKPANADLSDPNRAPSLEDLKKIKYESTTTAVATPAEIQLLGDLFKKLGLDANSVAPAMWDLARAYADVQASRSAVLSGTTPSNPAITRQALARQFYVINITPRQFCMYFAKVVWNLLLDSNVPPAGWAKQGLPDDCKFAGFDFFEGVLSPAALDPADGLIRPPSQREIQAHSTAKYGALARQRYRMETSFPPWLKSLTVGSAVSTPCTPLKHLQNCNRNTSKLKLVCGL.

The span at 1 to 10 (MATPSTQTTD) shows a compositional bias: polar residues. Residues 1–27 (MATPSTQTTDPKPANADLSDPNRAPSL) form a disordered region.

It belongs to the potexvirus capsid protein family.

The protein resides in the virion. In terms of biological role, required for genome encapsidation. Forms ribonucleoprotein complexes along with TGB1 helicase and viral RNA. The polypeptide is Coat protein (Narcissus pseudonarcissus (Daffodil)).